Here is a 262-residue protein sequence, read N- to C-terminus: 5'-nucleotidase SurE (262 aa).

Asp-8, Asp-9, Ser-40, and Asn-92 together coordinate a divalent metal cation.

Belongs to the SurE nucleotidase family. A divalent metal cation serves as cofactor.

The protein resides in the cytoplasm. It catalyses the reaction a ribonucleoside 5'-phosphate + H2O = a ribonucleoside + phosphate. Nucleotidase that shows phosphatase activity on nucleoside 5'-monophosphates. This Xylella fastidiosa (strain 9a5c) protein is 5'-nucleotidase SurE.